The primary structure comprises 224 residues: MGQKVHPIGFRLGVIRSWDSKWYEEKNYAKWLHEDIKLREFVKEKLGQAGISRIEIERAANKVKINVHTARPGIVIGKRGAGIETIKKDLQGLTDNEVYLNVVEVRKAETDAQLVAENIATQLERRIAFRRAMKKSVQTALKFGAKGIRVACSGRLGGSEMARYEWYREGRVPLHTLRADIDYGFAEAKTTYGKIGCKVWIMRGEVLPQSAGARAPRTTGGARP.

A KH type-2 domain is found at 38–106 (LREFVKEKLG…EVYLNVVEVR (69 aa)).

This sequence belongs to the universal ribosomal protein uS3 family. In terms of assembly, part of the 30S ribosomal subunit. Forms a tight complex with proteins S10 and S14.

In terms of biological role, binds the lower part of the 30S subunit head. Binds mRNA in the 70S ribosome, positioning it for translation. In Anaeromyxobacter dehalogenans (strain 2CP-C), this protein is Small ribosomal subunit protein uS3.